Reading from the N-terminus, the 79-residue chain is RNA-binding protein KhpA (79 aa).

The KH domain maps to 32–79 (FLEYHLNLDQSDVGRVIGRKGRTISAIRTIVYSVPTEYKKVRIVIDEK).

Belongs to the KhpA RNA-binding protein family. Forms a complex with KhpB. KhpA and KhpB colocalize throughout the cell cycle, with some increase at midcell in dividing cells.

The protein localises to the cytoplasm. In terms of biological role, a probable RNA chaperone. Forms a complex with KhpB which presumably binds to about 170 cellular RNAs (mRNA, tRNA intergenic RNA and sRNAs); the proteins alone each bind the same set of RNAs. A mutation in this gene suppresses the requirement for PBP2b (penA, a transpeptidase) in peripheral peptidoglycan (PG) synthesis. Probably plays a role in PG homeostasis and regulating peripheral PG synthesis. This chain is RNA-binding protein KhpA, found in Streptococcus pneumoniae serotype 2 (strain D39 / NCTC 7466).